Here is a 99-residue protein sequence, read N- to C-terminus: Osteocalcin (99 aa).

The N-terminal stretch at 1 to 23 (MRTLSLLTLLALTAFCLSDLAGA) is a signal peptide. The propeptide occupies 24–49 (KPSDSESDKAFMSKQEGSKVVNRLRR). In terms of domain architecture, Gla spans 50-96 (YLNNGLGAPAPYPDPLEPHREVCELNPNCDELADHIGFQDAYKRIYG). Pro-58 is subject to Hydroxyproline. Ca(2+) is bound by residues Glu-66, Glu-70, Glu-73, and Asp-79. 4-carboxyglutamate occurs at positions 66, 70, and 73. A disulfide bond links Cys-72 and Cys-78.

Belongs to the osteocalcin/matrix Gla protein family. Post-translationally, gamma-carboxyglutamate residues are formed by vitamin K dependent carboxylation by GGCX. These residues are essential for the binding of calcium. Decarboxylation promotes the hormone activity.

Its subcellular location is the secreted. The carboxylated form is one of the main organic components of the bone matrix, which constitutes 1-2% of the total bone protein: it acts as a negative regulator of bone formation and is required to limit bone formation without impairing bone resorption or mineralization. The carboxylated form binds strongly to apatite and calcium. In terms of biological role, the uncarboxylated form acts as a hormone secreted by osteoblasts, which regulates different cellular processes, such as energy metabolism, male fertility and brain development. Regulates of energy metabolism by acting as a hormone favoring pancreatic beta-cell proliferation, insulin secretion and sensitivity and energy expenditure. Uncarboxylated osteocalcin hormone also promotes testosterone production in the testes: acts as a ligand for G protein-coupled receptor GPRC6A at the surface of Leydig cells, initiating a signaling response that promotes the expression of enzymes required for testosterone synthesis in a CREB-dependent manner. Also acts as a regulator of brain development: osteocalcin hormone crosses the blood-brain barrier and acts as a ligand for GPR158 on neurons, initiating a signaling response that prevents neuronal apoptosis in the hippocampus, favors the synthesis of all monoamine neurotransmitters and inhibits that of gamma-aminobutyric acid (GABA). Osteocalcin also crosses the placenta during pregnancy and maternal osteocalcin is required for fetal brain development. In Rattus norvegicus (Rat), this protein is Osteocalcin (Bglap).